We begin with the raw amino-acid sequence, 393 residues long: Formate-dependent phosphoribosylglycinamide formyltransferase (393 aa).

Residues 22–23 (EL) and E82 each bind N(1)-(5-phospho-beta-D-ribosyl)glycinamide. ATP contacts are provided by residues R114, K155, 160–165 (SSGKGQ), 195–198 (EGFI), and E203. One can recognise an ATP-grasp domain in the interval 119–308 (RLAAEELDLP…QFALHARAIL (190 aa)). Residues E267 and E279 each contribute to the Mg(2+) site. Residues D286, K356, and 363–364 (RR) each bind N(1)-(5-phospho-beta-D-ribosyl)glycinamide.

It belongs to the PurK/PurT family. As to quaternary structure, homodimer.

The enzyme catalyses N(1)-(5-phospho-beta-D-ribosyl)glycinamide + formate + ATP = N(2)-formyl-N(1)-(5-phospho-beta-D-ribosyl)glycinamide + ADP + phosphate + H(+). Its pathway is purine metabolism; IMP biosynthesis via de novo pathway; N(2)-formyl-N(1)-(5-phospho-D-ribosyl)glycinamide from N(1)-(5-phospho-D-ribosyl)glycinamide (formate route): step 1/1. Involved in the de novo purine biosynthesis. Catalyzes the transfer of formate to 5-phospho-ribosyl-glycinamide (GAR), producing 5-phospho-ribosyl-N-formylglycinamide (FGAR). Formate is provided by PurU via hydrolysis of 10-formyl-tetrahydrofolate. The sequence is that of Formate-dependent phosphoribosylglycinamide formyltransferase from Pseudomonas putida (strain ATCC 47054 / DSM 6125 / CFBP 8728 / NCIMB 11950 / KT2440).